A 414-amino-acid chain; its full sequence is Transposon Ty4-J Gag polyprotein (414 aa).

Positions 39 to 115 (RKVSIKDEQV…IQLLETNENN (77 aa)) form a coiled coil. The interval 378–414 (GAQRQQPLKSSAKRTKVLEQDTKKVEQSVQQQKTGNY) is disordered. Residues 393 to 403 (KVLEQDTKKVE) are compositionally biased toward basic and acidic residues. Over residues 404–414 (QSVQQQKTGNY) the composition is skewed to polar residues.

Capsid protein (CA) is the structural component of the virus-like particle (VLP), forming the shell that encapsulates the retrotransposons dimeric RNA genome. The protein is Transposon Ty4-J Gag polyprotein (TY4A-J) of Saccharomyces cerevisiae (strain ATCC 204508 / S288c) (Baker's yeast).